Here is a 198-residue protein sequence, read N- to C-terminus: Probable chorismate pyruvate-lyase (198 aa).

Residues arginine 73, leucine 111, and glutamate 172 each contribute to the substrate site.

This sequence belongs to the UbiC family.

The protein localises to the cytoplasm. The catalysed reaction is chorismate = 4-hydroxybenzoate + pyruvate. It participates in cofactor biosynthesis; ubiquinone biosynthesis. Removes the pyruvyl group from chorismate, with concomitant aromatization of the ring, to provide 4-hydroxybenzoate (4HB) for the ubiquinone pathway. This Burkholderia lata (strain ATCC 17760 / DSM 23089 / LMG 22485 / NCIMB 9086 / R18194 / 383) protein is Probable chorismate pyruvate-lyase.